The primary structure comprises 207 residues: Germin-like protein 1 (207 aa).

Positions 1–17 (MLRIIFLLSLLFALSND) are cleaved as a signal peptide. An intrachain disulfide couples Cys-23 to Cys-38. The region spanning 51 to 197 (FSLGTPGNTT…TTFLPPATVK (147 aa)) is the Cupin type-1 domain. The N-linked (GlcNAc...) asparagine glycan is linked to Asn-58. 4 residues coordinate Mn(2+): His-99, His-101, Glu-106, and His-145.

This sequence belongs to the germin family. Oligomer (believed to be a pentamer but probably hexamer).

The protein resides in the secreted. The protein localises to the extracellular space. It localises to the apoplast. In terms of biological role, may play a role in plant defense. Probably has no oxalate oxidase activity even if the active site is conserved. In Brassica napus (Rape), this protein is Germin-like protein 1 (GER1).